The chain runs to 149 residues: Nucleoside diphosphate kinase (149 aa).

6 residues coordinate ATP: Lys-9, Phe-57, Arg-85, Thr-91, Arg-102, and Asn-112. His-115 functions as the Pros-phosphohistidine intermediate in the catalytic mechanism.

Belongs to the NDK family. As to quaternary structure, homotetramer. It depends on Mg(2+) as a cofactor.

It is found in the cytoplasm. It catalyses the reaction a 2'-deoxyribonucleoside 5'-diphosphate + ATP = a 2'-deoxyribonucleoside 5'-triphosphate + ADP. The catalysed reaction is a ribonucleoside 5'-diphosphate + ATP = a ribonucleoside 5'-triphosphate + ADP. Functionally, major role in the synthesis of nucleoside triphosphates other than ATP. The ATP gamma phosphate is transferred to the NDP beta phosphate via a ping-pong mechanism, using a phosphorylated active-site intermediate. The polypeptide is Nucleoside diphosphate kinase (Desulfitobacterium hafniense (strain Y51)).